Here is an 832-residue protein sequence, read N- to C-terminus: Beta-galactosidase (832 aa).

Residues 1–25 form the signal peptide; that stretch reads MALKLVLMLMVALLAAVWSPPAVTA. Glu-183 serves as the catalytic Proton donor. The Nucleophile role is filled by Glu-252. The SUEL-type lectin domain occupies 741–832; that stretch reads AYGRPKVHLS…KKLAVEAICE (92 aa).

The protein belongs to the glycosyl hydrolase 35 family.

It is found in the secreted. The protein localises to the extracellular space. Its subcellular location is the apoplast. It catalyses the reaction Hydrolysis of terminal non-reducing beta-D-galactose residues in beta-D-galactosides.. The chain is Beta-galactosidase from Asparagus officinalis (Garden asparagus).